Reading from the N-terminus, the 478-residue chain is Subtilisin-like protease 3 (478 aa).

The first 17 residues, 1–17, serve as a signal peptide directing secretion; sequence MKFSTILPILWANCCLC. Residues 70–167 form the Inhibitor I9 domain; that stretch reads RYVIVFNEDI…FVEQETTVKI (98 aa). Residues 177-478 enclose the Peptidase S8 domain; sequence PWGLHRVSHR…GGGKKLDGFW (302 aa). Residues aspartate 213, histidine 245, and serine 407 each act as charge relay system in the active site.

It belongs to the peptidase S8 family.

Serine protease with unknown substrate. The protein is Subtilisin-like protease 3 (YSP3) of Saccharomyces cerevisiae (strain ATCC 204508 / S288c) (Baker's yeast).